Consider the following 410-residue polypeptide: S-adenosylmethionine synthase (410 aa).

Residue His21 participates in ATP binding. Asp23 serves as a coordination point for Mg(2+). Glu49 contributes to the K(+) binding site. L-methionine is bound by residues Glu62 and Gln105. The interval 105–115 (QSQEIGAGVDQ) is flexible loop. A disordered region spans residues 107–133 (QEIGAGVDQSHEVRSGENTDADDQAGA). ATP is bound by residues 180–182 (DGK), Asp261, 267–268 (RK), Ala284, and Lys288. Asp261 serves as a coordination point for L-methionine. Lys292 is an L-methionine binding site.

This sequence belongs to the AdoMet synthase family. Homotetramer; dimer of dimers. Mg(2+) is required as a cofactor. The cofactor is K(+).

Its subcellular location is the cytoplasm. The enzyme catalyses L-methionine + ATP + H2O = S-adenosyl-L-methionine + phosphate + diphosphate. The protein operates within amino-acid biosynthesis; S-adenosyl-L-methionine biosynthesis; S-adenosyl-L-methionine from L-methionine: step 1/1. Its function is as follows. Catalyzes the formation of S-adenosylmethionine (AdoMet) from methionine and ATP. The overall synthetic reaction is composed of two sequential steps, AdoMet formation and the subsequent tripolyphosphate hydrolysis which occurs prior to release of AdoMet from the enzyme. In Corynebacterium diphtheriae (strain ATCC 700971 / NCTC 13129 / Biotype gravis), this protein is S-adenosylmethionine synthase.